The primary structure comprises 522 residues: MTVTEPVLHTTAEKLAELRERLELAKEPGGEKAAAKRDKKGIPSARARIYELVDPGSFMEIGALCRTPGDPNALYGDGVVTGHGLINGRPVGVFSHDQTVFGGTVGEMFGRKVARLMEWCAMVGCPIVGINDSGGARIQDAVTSLAWYAELGRRHELLSGLVPQISIILGKCAGGAVYSPIQTDLVVAVRDQGYMFVTGPDVIKDVTGEDVSLDELGGADHQASYGNIHQVVESEAAAYQYVRDFLSFLPSNCFDKPPVVNPGLEPEITGHDLELDSIVPDSDNMAYDMHEVLLRIFDDGDFLDVAAQAGQAIITGYARVDGRTVGVVANQPMHMSGAIDNEASDKAARFIRFSDAFDIPLVFVVDTPGFLPGVEQEKNGIIKRGGRFLYAVVEADVPKVTITIRKSYGGAYAVMGSKQLTADLNFAWPTARIAVIGADGAAQLLMKRFPDPNAPEAQAIRKSFVENYNLNMAIPWIAAERGFIDAVIDPHETRLLLRKSMHLLRDKQLWWRVGRKHGLIPV.

Residues 11–261 enclose the CoA carboxyltransferase N-terminal domain; that stretch reads TAEKLAELRE…NCFDKPPVVN (251 aa). In terms of domain architecture, CoA carboxyltransferase C-terminal spans 270 to 503; the sequence is GHDLELDSIV…RLLLRKSMHL (234 aa).

The protein belongs to the AccD/PCCB family. The biotin-dependent long-chain acyl-CoA carboxylase (LCC) complex is composed of AccA3, which contains the biotin carboxylase (BC) and biotin carboxyl carrier protein (BCCP) domains, and AccD4, which contains the carboxyl transferase (CT) domain. The complex also contains the beta5 subunit AccD5 and the epsilon subunit AccE5. The four subunits are essential for activity, but AccD5, together with AccE5, probably plays a structural role rather than a catalytic one.

Functionally, component of a biotin-dependent acyl-CoA carboxylase complex. This subunit transfers the CO2 from carboxybiotin to the CoA ester substrate. When associated with the alpha3 subunit AccA3, the beta5 subunit AccD5 and the epsilon subunit AccE5, forms the LCC complex, which is involved in the carboxylation of long chain acyl-CoA. The LCC complex can use C16-C24 substrates, the highest specific activity is obtained with carboxy-C20-CoA. Has low activity with acetyl-CoA and propionyl-CoA. The polypeptide is Biotin-dependent long chain acyl-coenzyme A carboxylase beta4 subunit (Mycobacterium tuberculosis (strain ATCC 25618 / H37Rv)).